The chain runs to 258 residues: MYDDIFFYLALWVIQSVYGAWDWAKNWVFWTCSYLLNFLYHHHCSRDLIRRDTKKLKKKPKHIAVIIECVEDGGIEGLIHDACELSAWCVCSNIRELTIYERKGFLKQSPEAVEKAIYSHLPFYLGGDKCTVHVTNPCSPDEKNQNDCVDLKVHLIAKEDGRDAIIDLTRGLADLCTKKVISSTQVTLELIDKELKESVIPEPDLLIIFAPLLKLQGFPPWQLRLCEIFHDPILYTTNYLTFFKALVHYSNAEMRLGH.

A helical transmembrane segment spans residues 5-21 (IFFYLALWVIQSVYGAW).

It belongs to the UPP synthase family. As to quaternary structure, forms an active dehydrodolichyl diphosphate synthase complex with SPAC4D7.04c. Mg(2+) serves as cofactor.

It localises to the endoplasmic reticulum membrane. It carries out the reaction n isopentenyl diphosphate + (2E,6E)-farnesyl diphosphate = a di-trans,poly-cis-polyprenyl diphosphate + n diphosphate. It functions in the pathway protein modification; protein glycosylation. Its function is as follows. With SPAC4D7.04c, forms the dehydrodolichyl diphosphate synthase (DDS) complex, an essential component of the dolichol monophosphate (Dol-P) biosynthetic machinery. Adds multiple copies of isopentenyl pyrophosphate (IPP) to farnesyl pyrophosphate (FPP) to produce dehydrodolichyl diphosphate (Dedol-PP), a precursor of dolichol which is utilized as a sugar carrier in protein glycosylation in the endoplasmic reticulum (ER). The protein is Dehydrodolichyl diphosphate synthase complex subunit nus1 (nus1) of Schizosaccharomyces pombe (strain 972 / ATCC 24843) (Fission yeast).